Here is a 277-residue protein sequence, read N- to C-terminus: 4-hydroxy-tetrahydrodipicolinate reductase (277 aa).

NAD(+) contacts are provided by residues 11 to 16 (GALGRM) and 110 to 112 (GTT). His-166 (proton donor/acceptor) is an active-site residue. His-167 contacts (S)-2,3,4,5-tetrahydrodipicolinate. Lys-170 acts as the Proton donor in catalysis. 176 to 177 (GT) contributes to the (S)-2,3,4,5-tetrahydrodipicolinate binding site.

The protein belongs to the DapB family.

The protein resides in the cytoplasm. It carries out the reaction (S)-2,3,4,5-tetrahydrodipicolinate + NAD(+) + H2O = (2S,4S)-4-hydroxy-2,3,4,5-tetrahydrodipicolinate + NADH + H(+). The catalysed reaction is (S)-2,3,4,5-tetrahydrodipicolinate + NADP(+) + H2O = (2S,4S)-4-hydroxy-2,3,4,5-tetrahydrodipicolinate + NADPH + H(+). The protein operates within amino-acid biosynthesis; L-lysine biosynthesis via DAP pathway; (S)-tetrahydrodipicolinate from L-aspartate: step 4/4. In terms of biological role, catalyzes the conversion of 4-hydroxy-tetrahydrodipicolinate (HTPA) to tetrahydrodipicolinate. This is 4-hydroxy-tetrahydrodipicolinate reductase from Synechococcus sp. (strain CC9902).